The primary structure comprises 483 residues: Glutamyl-tRNA(Gln) amidotransferase subunit A (483 aa).

Residues lysine 76 and serine 151 each act as charge relay system in the active site. The Acyl-ester intermediate role is filled by serine 175.

The protein belongs to the amidase family. GatA subfamily. In terms of assembly, heterotrimer of A, B and C subunits.

The enzyme catalyses L-glutamyl-tRNA(Gln) + L-glutamine + ATP + H2O = L-glutaminyl-tRNA(Gln) + L-glutamate + ADP + phosphate + H(+). Its function is as follows. Allows the formation of correctly charged Gln-tRNA(Gln) through the transamidation of misacylated Glu-tRNA(Gln) in organisms which lack glutaminyl-tRNA synthetase. The reaction takes place in the presence of glutamine and ATP through an activated gamma-phospho-Glu-tRNA(Gln). This is Glutamyl-tRNA(Gln) amidotransferase subunit A from Ectopseudomonas mendocina (strain ymp) (Pseudomonas mendocina).